The chain runs to 398 residues: MSSSSSPPAASAAARLDLDGNPIAPLTICMIGAGGFIGSHLCEKLMAETAHVVYAVDVYCDKIRHLVDPAPPHLHGRISFHRLNIKNDSRLEGLIKMADLTINLAAICTPADYNTRPLDTIYSNFIDALPVVKYCSENNKRLIHFSTCEVYGKTIGSFLPTDHPLRKEPEFYVLKEDESPCIFGPIVKQRWSYACAKQLIERLIFAEGAENGLEFTIVRPFNWIGPRMDFIPGVDGPSEGVPRVLACFSNNLLRREPLKLVDGGQSQRTFVYIKDAIEAVHLMIENPARANGQIFNVGNPNNEVTVRQLAEMMTEVYANVSGEPPLDEPMIDVSSKQFYGEGYDDSDKRIPDMTIINKQLGWNPKTPLKDLLETTLTYQHKTYKEAIKRQMSQASASS.

57–88 (DVYCDKIRHLVDPAPPHLHGRISFHRLNIKND) is a binding site for NAD(+). Arg190 lines the substrate pocket. Tyr193 acts as the Proton acceptor in catalysis. 193–197 (YACAK) lines the NAD(+) pocket. A substrate-binding site is contributed by Asn222. Residue Arg243 participates in NAD(+) binding. Substrate is bound by residues 244–248 (VLACF), 261–268 (VDGGQSQR), and 345–349 (DSDKR).

Belongs to the NAD(P)-dependent epimerase/dehydratase family. As to quaternary structure, homodimer. NAD(+) serves as cofactor.

It is found in the cytoplasm. In terms of biological role, catalyzes the conversion of UDP-D-glucuronate to a mixture of UDP-D-apiose and UDP-D-xylose. D-Apiose (3-C-hydroxymethyl-d-erythrose) is the only plant cell wall monosaccharide with a branched carbon skeleton and found in rhamnogalacturonan II (RG-II), apiogalacturonan, and several apioglycosides. The polypeptide is UDP-D-apiose/UDP-D-xylose synthase (Oryza sativa subsp. japonica (Rice)).